Consider the following 525-residue polypeptide: D-aminopeptidase (525 aa).

Ser62 (nucleophile) is an active-site residue. Lys65 serves as the catalytic Proton donor/acceptor. The segment at 485-495 is important for specificity; that stretch reads PRALDHTAPGD. Asp489 is a binding site for substrate.

It belongs to the peptidase S12 family. In terms of assembly, homodimer.

The enzyme catalyses Release of an N-terminal D-amino acid from a peptide, Xaa-|-Yaa-, in which Xaa is preferably D-Ala, D-Ser or D-Thr. D-amino acid amides and methyl esters also are hydrolyzed, as is glycine amide.. With respect to regulation, inhibited by beta-lactam compounds such as 6-aminopenicillic acid, 7-aminocephalosporanic acid, benzylpenicillin and ampicillin. Inhibited by p-chloromercuribenzoate. Functionally, hydrolyzes N-terminal residues in D-amino acid-containing peptides. In Gluconobacter oxydans (strain 621H) (Gluconobacter suboxydans), this protein is D-aminopeptidase.